The following is a 347-amino-acid chain: Integrin beta-1-binding protein 2 (347 aa).

Zn(2+) is bound by residues cysteine 5, cysteine 10, cysteine 24, and histidine 27. A CHORD 1 domain is found at 5 to 64; that stretch reads CRNKGCGQHFDPNTNLPDSCCHHPGVPIFHDALKGWSCCRKRTVDFSEFLNIKGCTMGPH. The SH3-binding motif lies at 28-31; the sequence is PGVP. Residues cysteine 42, cysteine 43, cysteine 59, and histidine 64 each coordinate Zn(2+). The SH3-binding signature appears at 70–78; the sequence is PEAPQPEGP. 2 residues coordinate Zn(2+): cysteine 149 and cysteine 154. Positions 149–208 constitute a CHORD 2 domain; the sequence is CQNPGCDAVYQGPESDATPCTYHPGAPRFHEGMKSWSCCGIQTLDFGAFLAQPGCRVGRH. The SH2-binding motif lies at 158 to 161; sequence YQGP. Zn(2+)-binding residues include cysteine 168 and histidine 171. Positions 172–175 match the SH3-binding motif; sequence PGAP. Cysteine 186, cysteine 187, cysteine 203, and histidine 208 together coordinate Zn(2+). The region spanning 215 to 304 is the CS domain; it reads PASCRHDWHQ…ADPGSWAQLE (90 aa). Residues 234–237 carry the SH2-binding motif; the sequence is YGQI. The interval 319-347 is disordered; that stretch reads LEMDEEESDDSDDDLSWTEEEEEEEAMGE. The span at 320-347 shows a compositional bias: acidic residues; it reads EMDEEESDDSDDDLSWTEEEEEEEAMGE.

As to quaternary structure, interacts with beta-1 integrin subunit. This interaction is regulated by divalent cations, and it occurs only in absence of calcium. In terms of tissue distribution, expressed in skeletal and cardiac muscles but not in other tissues.

Functionally, may play a role during maturation and/or organization of muscles cells. This chain is Integrin beta-1-binding protein 2 (ITGB1BP2), found in Homo sapiens (Human).